Here is a 689-residue protein sequence, read N- to C-terminus: Glycine--tRNA ligase beta subunit (689 aa).

It belongs to the class-II aminoacyl-tRNA synthetase family. In terms of assembly, tetramer of two alpha and two beta subunits.

The protein localises to the cytoplasm. The catalysed reaction is tRNA(Gly) + glycine + ATP = glycyl-tRNA(Gly) + AMP + diphosphate. The chain is Glycine--tRNA ligase beta subunit from Shewanella baltica (strain OS155 / ATCC BAA-1091).